A 211-amino-acid polypeptide reads, in one-letter code: Dephospho-CoA kinase (211 aa).

Residues 3–206 form the DPCK domain; it reads VIGLTGGIAT…GGRGRRLPNA (204 aa). Residue 11-16 coordinates ATP; sequence ATGKST.

It belongs to the CoaE family.

It is found in the cytoplasm. It carries out the reaction 3'-dephospho-CoA + ATP = ADP + CoA + H(+). The protein operates within cofactor biosynthesis; coenzyme A biosynthesis; CoA from (R)-pantothenate: step 5/5. In terms of biological role, catalyzes the phosphorylation of the 3'-hydroxyl group of dephosphocoenzyme A to form coenzyme A. The chain is Dephospho-CoA kinase from Anaeromyxobacter dehalogenans (strain 2CP-C).